The chain runs to 192 residues: Shikimate kinase (192 aa).

Residue 15–20 (GAGKTT) coordinates ATP. T19 is a Mg(2+) binding site. The substrate site is built by D37, R61, and G83. Position 121 (R121) interacts with ATP. R140 serves as a coordination point for substrate.

Belongs to the shikimate kinase family. In terms of assembly, monomer. It depends on Mg(2+) as a cofactor.

The protein localises to the cytoplasm. It carries out the reaction shikimate + ATP = 3-phosphoshikimate + ADP + H(+). It functions in the pathway metabolic intermediate biosynthesis; chorismate biosynthesis; chorismate from D-erythrose 4-phosphate and phosphoenolpyruvate: step 5/7. Catalyzes the specific phosphorylation of the 3-hydroxyl group of shikimic acid using ATP as a cosubstrate. This Cupriavidus pinatubonensis (strain JMP 134 / LMG 1197) (Cupriavidus necator (strain JMP 134)) protein is Shikimate kinase.